A 288-amino-acid polypeptide reads, in one-letter code: UAP56-interacting factor (288 aa).

The UAP56-binding motif motif lies at 11–29 (TIDKIDMSLDDIIKLNKQE). Positions 183 to 202 (DLPELSKTPPWRTSVSSGGS) are disordered.

Belongs to the UIF family.

The protein resides in the nucleus. Its subcellular location is the nucleoplasm. It is found in the nucleus speckle. In terms of biological role, required for mRNA export from the nucleus to the cytoplasm. Acts as an adapter that uses the ddx39b/uap56-nfx1 pathway to ensure efficient mRNA export and delivering to the nuclear pore. This chain is UAP56-interacting factor (fyttd1), found in Xenopus laevis (African clawed frog).